The chain runs to 480 residues: tRNA-2-methylthio-N(6)-dimethylallyladenosine synthase (480 aa).

The MTTase N-terminal domain occupies 2–118 (NRVHIKTYGC…VPGYLDNLRA (117 aa)). Positions 11, 47, and 81 each coordinate [4Fe-4S] cluster. The interval 145 to 169 (DHLLPQDSDSDSQPSTLNSQLRGAA) is disordered. Residues 149 to 159 (PQDSDSDSQPS) are compositionally biased toward low complexity. In terms of domain architecture, Radical SAM core spans 171–405 (PPPQITAFVS…LELLRQNSER (235 aa)). Residues C185, C189, and C192 each contribute to the [4Fe-4S] cluster site. A TRAM domain is found at 408–470 (ALLLDTVEEV…VSTLYGELML (63 aa)).

Belongs to the methylthiotransferase family. MiaB subfamily. Monomer. The cofactor is [4Fe-4S] cluster.

It is found in the cytoplasm. The enzyme catalyses N(6)-dimethylallyladenosine(37) in tRNA + (sulfur carrier)-SH + AH2 + 2 S-adenosyl-L-methionine = 2-methylsulfanyl-N(6)-dimethylallyladenosine(37) in tRNA + (sulfur carrier)-H + 5'-deoxyadenosine + L-methionine + A + S-adenosyl-L-homocysteine + 2 H(+). Its function is as follows. Catalyzes the methylthiolation of N6-(dimethylallyl)adenosine (i(6)A), leading to the formation of 2-methylthio-N6-(dimethylallyl)adenosine (ms(2)i(6)A) at position 37 in tRNAs that read codons beginning with uridine. This chain is tRNA-2-methylthio-N(6)-dimethylallyladenosine synthase, found in Opitutus terrae (strain DSM 11246 / JCM 15787 / PB90-1).